A 373-amino-acid polypeptide reads, in one-letter code: MLDRDVGPTPMYPPTYLEPGIGRHTPYGNQTDYRIFELNKRLQNWTEECDNLWWDAFTTEFFEDDAMLTITFCLEDGPKRYTIGRTLIPRYFRSIFEGGATELYYVLKHPKESFHNNFVSLDCDQCTMVTQHGKPMFTQVCVEGRLYLEFMFDDMMRIKTWHFSIRQHRELIPRSILAMHAQDPQMLDQLSKNITRCGLSNSTLNYLRLCVILEPMQELMSRHKTYSLSPRDCLKTCLFQKWQRMVAPPAEPARQAPNKRRKRKMSGGSTMSSGGGNTNNSNSKKKSPASTFALSSQDVMVVGEPTLMGGEFGDEDERLITRLENTQFDAANGIDDEDSFNNSPALGANSPWNSKPPSSQESKSENPTSQASQ.

Disordered stretches follow at residues 248-297 and 329-373; these read PPAE…LSSQ and DAAN…QASQ. Residues 266–282 are compositionally biased toward low complexity; the sequence is SGGSTMSSGGGNTNNSN. Residues 288-297 are compositionally biased toward polar residues; the sequence is PASTFALSSQ. The region spanning 298–337 is the LIM interaction domain (LID) domain; it reads DVMVVGEPTLMGGEFGDEDERLITRLENTQFDAANGIDDE.

It belongs to the LDB family. In terms of assembly, forms homodimers and heterodimers. Interacts with and activates lhx1/lim1. The stoichiometry of lhx1/lim1 and ldb1 is important for their function and an excess of ldb1 can inhibit lhx1/lim1 function. When bound to lhx1/lim1, escapes degradation by rnf12. Interacts with the N-terminal region of rnf12. Undergoes rnf12-mediated ubiquitin-proteasome-dependent degradation.

Its subcellular location is the nucleus. Functionally, binds to the LIM domain of a wide variety of LIM domain-containing transcription factors. Acts as a coactivator together with otx2 to stimulate lhx1/lim1-mediated activation of the gsc promoter in the Spemann organizer. Acts synergistically with lhx1/lim1 and ssbp in axis formation. This is LIM domain-binding protein 1 from Xenopus tropicalis (Western clawed frog).